A 214-amino-acid polypeptide reads, in one-letter code: MRIMLLGAPGAGKGTQAQFIMEKYGIPQISTGDMLRAAVKAGTPLGLEAKKVMDAGQLVSDELIIGLVKERVAQDDCAKGFLLDGFPRTIPQADAMAAGGIAIDHVVEIDVPDEEIVKRMGGRRVHPGSGRVYHIVFNQPKVEGKDDVTGEDLAIRPDDEEATVRKRLDIYHEQTKPLVEYYGAVAAKGEATYNKFDGTQSVAKVSEEIVAALS.

ATP is bound at residue 10–15 (GAGKGT). The tract at residues 30–59 (STGDMLRAAVKAGTPLGLEAKKVMDAGQLV) is NMP. Residues Thr31, Arg36, 57-59 (QLV), 85-88 (GFPR), and Gln92 each bind AMP. Positions 122–159 (GRRVHPGSGRVYHIVFNQPKVEGKDDVTGEDLAIRPDD) are LID. ATP is bound by residues Arg123 and 132–133 (VY). Residues Arg156 and Arg167 each coordinate AMP. Gln200 is a binding site for ATP.

Belongs to the adenylate kinase family. Monomer.

Its subcellular location is the cytoplasm. It catalyses the reaction AMP + ATP = 2 ADP. It participates in purine metabolism; AMP biosynthesis via salvage pathway; AMP from ADP: step 1/1. Catalyzes the reversible transfer of the terminal phosphate group between ATP and AMP. Plays an important role in cellular energy homeostasis and in adenine nucleotide metabolism. The sequence is that of Adenylate kinase from Shewanella piezotolerans (strain WP3 / JCM 13877).